We begin with the raw amino-acid sequence, 194 residues long: Aminodeoxychorismate/anthranilate synthase component 2 (194 aa).

A Glutamine amidotransferase type-1 domain is found at 1–194 (MILMIDNYDS…IETYRKEVIA (194 aa)). Active-site residues include Cys-79, His-168, and Glu-170.

Monomer. Heterodimer consisting of two non-identical subunits: a glutamine amidotransferase subunit (PabA) and a aminodeoxychorismate synthase subunit (PabB).

The enzyme catalyses chorismate + L-glutamine = anthranilate + pyruvate + L-glutamate + H(+). It carries out the reaction chorismate + L-glutamine = 4-amino-4-deoxychorismate + L-glutamate. It participates in amino-acid biosynthesis; L-tryptophan biosynthesis; L-tryptophan from chorismate: step 1/5. Its pathway is cofactor biosynthesis; tetrahydrofolate biosynthesis; 4-aminobenzoate from chorismate: step 1/2. Functionally, part of a heterodimeric complex that catalyzes the two-step biosynthesis of 4-amino-4-deoxychorismate (ADC), a precursor of p-aminobenzoate (PABA) and tetrahydrofolate. In the first step, a glutamine amidotransferase (PabA) generates ammonia as a substrate that, along with chorismate, is used in the second step, catalyzed by aminodeoxychorismate synthase (PabB) to produce ADC. PabA converts glutamine into glutamate only in the presence of stoichiometric amounts of PabB. Also involved in the biosynthesis of anthranilate. Complements a glutamine amidotransferase-negative mutant. This Bacillus subtilis (strain 168) protein is Aminodeoxychorismate/anthranilate synthase component 2.